The following is a 500-amino-acid chain: Probable malate:quinone oxidoreductase (500 aa).

It belongs to the MQO family. FAD is required as a cofactor.

It carries out the reaction (S)-malate + a quinone = a quinol + oxaloacetate. The protein operates within carbohydrate metabolism; tricarboxylic acid cycle; oxaloacetate from (S)-malate (quinone route): step 1/1. This chain is Probable malate:quinone oxidoreductase, found in Bordetella avium (strain 197N).